The sequence spans 183 residues: Guanylate kinase (183 aa).

The 179-residue stretch at 4–182 (GRVVVLTGPS…AITALEAAIF (179 aa)) folds into the Guanylate kinase-like domain. 11 to 18 (GPSGVGKG) serves as a coordination point for ATP.

This sequence belongs to the guanylate kinase family.

It is found in the cytoplasm. The catalysed reaction is GMP + ATP = GDP + ADP. It carries out the reaction dZMP + ATP = dZDP + ADP. It functions in the pathway purine metabolism. In terms of biological role, essential for recycling GMP and indirectly, cGMP. Functionally, (Microbial infection) Catalyzes the phosphorylation of dZMP to dZDP, when the bacterium is infected by a phage that produces the substrate for the synthesis of dZTP (2- amino-2'-deoxyadenosine 5'-triphosphate), which is then used by the phage as a DNA polymerase substrate. In Synechococcus sp. (strain ATCC 27144 / PCC 6301 / SAUG 1402/1) (Anacystis nidulans), this protein is Guanylate kinase.